Here is a 397-residue protein sequence, read N- to C-terminus: Cathepsin E-A (397 aa).

The first 16 residues, 1-16 (MRQILVLLLFATLVYG), serve as a signal peptide directing secretion. The propeptide at 17–52 (LIRVPLKRQKSIRKTLKEKGKLSHIWTQQGIDMVQY) is activation peptide. In terms of domain architecture, Peptidase A1 spans 74 to 385 (YFGEISVGTP…DRGNNRVGLA (312 aa)). N-linked (GlcNAc...) asparagine glycosylation occurs at Asn86. The active site involves Asp92. A disulfide bridge connects residues Cys105 and Cys110. Asn130 carries an N-linked (GlcNAc...) asparagine glycan. Cysteines 268 and 272 form a disulfide. Residue Asp277 is part of the active site. Cys310 and Cys344 are disulfide-bonded.

Belongs to the peptidase A1 family. Homodimer; disulfide-linked. Post-translationally, glycosylated. Contains high mannose-type oligosaccharide. In terms of tissue distribution, expressed predominantly in the larval foregut and the anterior and posterior adult stomach.

The protein resides in the endosome. The enzyme catalyses Similar to cathepsin D, but slightly broader specificity.. Its function is as follows. May have a role in immune function. Probably involved in the processing of antigenic peptides during MHC class II-mediated antigen presentation. This Xenopus laevis (African clawed frog) protein is Cathepsin E-A (ctse-a).